Consider the following 387-residue polypeptide: MSNDFLFTSESVSEGHPDKVADQISDAVLDAILAQDKYARVAAETLCNTGLVVLAGEITTTANVDYIQVARETIKRIGYDNTEYGIDYKGCAVLVAYDKQSPDIAQGVDRASDDYLNQGAGDQGLMFGYACDETPELMPFPIYYSHRLVERQSLLRRDGRLPWLRPDAKSQVTVRYVDGRPHSVDTVVLSTQHAPDISQAQIREAVIEEIIKPVLPAEMLKETKYLVNPTGRFVIGGPQGDCGLTGRKIIVDTYGGASPHGGGAFSGKDPSKVDRSAAYAARYVAKNVVAAGLARQCQVQVSYAIGVARPINVTVYTEGTGKISDEKIAALVQEHFDLRPKGIVQMLDLLRPIYEKTAAYGHFGREEPEFSWEATDKAAILRAAAGL.

Position 16 (H16) interacts with ATP. D18 contacts Mg(2+). E44 provides a ligand contact to K(+). L-methionine is bound by residues E57 and Q100. The interval 100–110 (QSPDIAQGVDR) is flexible loop. Residues 167–169 (DAK), 232–233 (RF), D241, 247–248 (RK), A264, and K268 each bind ATP. An L-methionine-binding site is contributed by D241. An L-methionine-binding site is contributed by K272.

The protein belongs to the AdoMet synthase family. As to quaternary structure, homotetramer; dimer of dimers. It depends on Mg(2+) as a cofactor. The cofactor is K(+).

The protein resides in the cytoplasm. The enzyme catalyses L-methionine + ATP + H2O = S-adenosyl-L-methionine + phosphate + diphosphate. It functions in the pathway amino-acid biosynthesis; S-adenosyl-L-methionine biosynthesis; S-adenosyl-L-methionine from L-methionine: step 1/1. In terms of biological role, catalyzes the formation of S-adenosylmethionine (AdoMet) from methionine and ATP. The overall synthetic reaction is composed of two sequential steps, AdoMet formation and the subsequent tripolyphosphate hydrolysis which occurs prior to release of AdoMet from the enzyme. This chain is S-adenosylmethionine synthase, found in Cupriavidus metallidurans (strain ATCC 43123 / DSM 2839 / NBRC 102507 / CH34) (Ralstonia metallidurans).